A 61-amino-acid chain; its full sequence is Metallothionein-2B (61 aa).

At methionine 1 the chain carries N-acetylmethionine. The interval methionine 1–cysteine 29 is beta. Cysteine 5, cysteine 7, cysteine 13, cysteine 15, cysteine 19, cysteine 21, cysteine 24, cysteine 26, cysteine 29, cysteine 33, cysteine 34, cysteine 36, cysteine 37, cysteine 41, cysteine 44, cysteine 48, cysteine 50, cysteine 57, cysteine 59, and cysteine 60 together coordinate a divalent metal cation. Positions lysine 30–alanine 61 are alpha.

This sequence belongs to the metallothionein superfamily. Type 1 family. In terms of assembly, monomer.

Metallothioneins have a high content of cysteine residues that bind various heavy metals; these proteins are transcriptionally regulated by both heavy metals and glucocorticoids. The chain is Metallothionein-2B (MT2B) from Sus scrofa (Pig).